Consider the following 566-residue polypeptide: Transmembrane protein 151B (566 aa).

Low complexity predominate over residues 1 to 11 (MSPPGSAAGES). The segment at 1 to 25 (MSPPGSAAGESAAGGGGGGGGPGVS) is disordered. The span at 12–23 (AAGGGGGGGGPG) shows a compositional bias: gly residues. 2 helical membrane passes run 65-85 (CLLLSLLMYGCLGAVAWCHVT) and 112-132 (YVYIPLAFLLMLYAVYLVECW). Polar residues predominate over residues 495–512 (VNEASCPTEQTRLSSQAS). The interval 495 to 529 (VNEASCPTEQTRLSSQASMGDDEDDDEEEAGPPPP) is disordered. A compositionally biased stretch (acidic residues) spans 514 to 524 (GDDEDDDEEEA).

The protein belongs to the TMEM151 family.

The protein resides in the membrane. In Homo sapiens (Human), this protein is Transmembrane protein 151B (TMEM151B).